Reading from the N-terminus, the 206-residue chain is Uracil phosphoribosyltransferase (206 aa).

Residues arginine 76, arginine 101, and 128–136 contribute to the 5-phospho-alpha-D-ribose 1-diphosphate site; that span reads DPMLATGTT. Residues isoleucine 191 and 196-198 each bind uracil; that span reads GDA. Aspartate 197 lines the 5-phospho-alpha-D-ribose 1-diphosphate pocket.

Belongs to the UPRTase family. Requires Mg(2+) as cofactor.

It carries out the reaction UMP + diphosphate = 5-phospho-alpha-D-ribose 1-diphosphate + uracil. It functions in the pathway pyrimidine metabolism; UMP biosynthesis via salvage pathway; UMP from uracil: step 1/1. Allosterically activated by GTP. Functionally, catalyzes the conversion of uracil and 5-phospho-alpha-D-ribose 1-diphosphate (PRPP) to UMP and diphosphate. The chain is Uracil phosphoribosyltransferase from Mycoplasma genitalium (strain ATCC 33530 / DSM 19775 / NCTC 10195 / G37) (Mycoplasmoides genitalium).